The chain runs to 73 residues: Sec-independent protein translocase protein TatA (73 aa).

Residues 1-21 form a helical membrane-spanning segment; the sequence is MGSFSIWHWLIVLVIVMLVFG. Positions 44 to 73 are disordered; sequence KSAEDPNEQIPQSTTTAEKTVDVQAKDINK. A compositionally biased stretch (polar residues) spans 52–61; that stretch reads QIPQSTTTAE. Positions 62–73 are enriched in basic and acidic residues; the sequence is KTVDVQAKDINK.

The protein belongs to the TatA/E family. In terms of assembly, the Tat system comprises two distinct complexes: a TatABC complex, containing multiple copies of TatA, TatB and TatC subunits, and a separate TatA complex, containing only TatA subunits. Substrates initially bind to the TatABC complex, which probably triggers association of the separate TatA complex to form the active translocon.

Its subcellular location is the cell inner membrane. Functionally, part of the twin-arginine translocation (Tat) system that transports large folded proteins containing a characteristic twin-arginine motif in their signal peptide across membranes. TatA could form the protein-conducting channel of the Tat system. The protein is Sec-independent protein translocase protein TatA of Polynucleobacter asymbioticus (strain DSM 18221 / CIP 109841 / QLW-P1DMWA-1) (Polynucleobacter necessarius subsp. asymbioticus).